Here is a 186-residue protein sequence, read N- to C-terminus: Putative 3-methyladenine DNA glycosylase (186 aa).

Belongs to the DNA glycosylase MPG family.

The chain is Putative 3-methyladenine DNA glycosylase from Borreliella burgdorferi (strain ATCC 35210 / DSM 4680 / CIP 102532 / B31) (Borrelia burgdorferi).